The chain runs to 117 residues: Large ribosomal subunit protein uL18 (117 aa).

It belongs to the universal ribosomal protein uL18 family. Part of the 50S ribosomal subunit; part of the 5S rRNA/L5/L18/L25 subcomplex. Contacts the 5S and 23S rRNAs.

In terms of biological role, this is one of the proteins that bind and probably mediate the attachment of the 5S RNA into the large ribosomal subunit, where it forms part of the central protuberance. In Haemophilus ducreyi (strain 35000HP / ATCC 700724), this protein is Large ribosomal subunit protein uL18.